The following is a 287-amino-acid chain: Large ribosomal subunit protein uL2 (287 aa).

The interval 222 to 266 (RGIRPTVRGSAMNPNDHPHGGGEGRSPVGRDAPRTPWGKRHMGVK) is disordered.

This sequence belongs to the universal ribosomal protein uL2 family. As to quaternary structure, part of the 50S ribosomal subunit. Forms a bridge to the 30S subunit in the 70S ribosome.

Functionally, one of the primary rRNA binding proteins. Required for association of the 30S and 50S subunits to form the 70S ribosome, for tRNA binding and peptide bond formation. It has been suggested to have peptidyltransferase activity; this is somewhat controversial. Makes several contacts with the 16S rRNA in the 70S ribosome. This chain is Large ribosomal subunit protein uL2, found in Mycoplasma pneumoniae (strain ATCC 29342 / M129 / Subtype 1) (Mycoplasmoides pneumoniae).